The sequence spans 205 residues: Proteasome subunit beta (205 aa).

Residues 1–9 constitute a propeptide, removed in mature form; by autocatalysis; sequence MNQTENMEG. The active-site Nucleophile is the T10.

Belongs to the peptidase T1B family. As to quaternary structure, the 20S proteasome core is composed of 14 alpha and 14 beta subunits that assemble into four stacked heptameric rings, resulting in a barrel-shaped structure. The two inner rings, each composed of seven catalytic beta subunits, are sandwiched by two outer rings, each composed of seven alpha subunits. The catalytic chamber with the active sites is on the inside of the barrel. Has a gated structure, the ends of the cylinder being occluded by the N-termini of the alpha-subunits. Is capped at one or both ends by the proteasome regulatory ATPase, PAN.

Its subcellular location is the cytoplasm. It catalyses the reaction Cleavage of peptide bonds with very broad specificity.. The formation of the proteasomal ATPase PAN-20S proteasome complex, via the docking of the C-termini of PAN into the intersubunit pockets in the alpha-rings, triggers opening of the gate for substrate entry. Interconversion between the open-gate and close-gate conformations leads to a dynamic regulation of the 20S proteasome proteolysis activity. In terms of biological role, component of the proteasome core, a large protease complex with broad specificity involved in protein degradation. The chain is Proteasome subunit beta from Methanosphaera stadtmanae (strain ATCC 43021 / DSM 3091 / JCM 11832 / MCB-3).